A 200-amino-acid chain; its full sequence is Recombination protein RecR (200 aa).

A C4-type zinc finger spans residues 58–75 (CPTCFCLKSHPESVCSFC). The Toprim domain occupies 82–177 (SILCIVATPK…SVSRLALGLP (96 aa)).

It belongs to the RecR family.

In terms of biological role, may play a role in DNA repair. It seems to be involved in an RecBC-independent recombinational process of DNA repair. It may act with RecF and RecO. The protein is Recombination protein RecR of Chlamydia abortus (strain DSM 27085 / S26/3) (Chlamydophila abortus).